The primary structure comprises 313 residues: Ribosomal RNA small subunit methyltransferase H (313 aa).

Residues 35 to 37 (GGH), Asp-55, Phe-80, Asp-102, and Gln-109 contribute to the S-adenosyl-L-methionine site.

Belongs to the methyltransferase superfamily. RsmH family.

It is found in the cytoplasm. It catalyses the reaction cytidine(1402) in 16S rRNA + S-adenosyl-L-methionine = N(4)-methylcytidine(1402) in 16S rRNA + S-adenosyl-L-homocysteine + H(+). In terms of biological role, specifically methylates the N4 position of cytidine in position 1402 (C1402) of 16S rRNA. This is Ribosomal RNA small subunit methyltransferase H from Shewanella amazonensis (strain ATCC BAA-1098 / SB2B).